Consider the following 386-residue polypeptide: O-methyltransferase aunE (386 aa).

S-adenosyl-L-methionine is bound at residue Trp200. His299 (proton acceptor) is an active-site residue.

This sequence belongs to the class I-like SAM-binding methyltransferase superfamily. Cation-independent O-methyltransferase family.

It participates in secondary metabolite biosynthesis. O-methyltransferase; part of the gene cluster that mediates the biosynthesis of aurasperone B, a dimeric gamma-naphthopyrone. The first step in the biosynthesis of aurasperone B is the production of gamma-naphthopyrone precursor YWA1 by the non-reducing polyketide synthase albA, via condensation of one acetyl-CoA starter unit with 6 malonyl-CoA units. YWA1 is then methylated by aunE at position C-6 to yield foncesin which is further methylated at position C-8 by aunD to produce fonsecin B. A key enzyme in the biosynthetic pathway is the cytochrome P450 monooxygenase aunB which catalyzes the oxidative dimerization of fonsecin B to aurasperone B. AunB also catalyzes the oxidative dimerization of rubrofusarin B into aurasperone A. The sequence is that of O-methyltransferase aunE from Aspergillus niger (strain ATCC MYA-4892 / CBS 513.88 / FGSC A1513).